The chain runs to 86 residues: MKSHIAIICIIMLSFFSMHEYRCVGSTIGRSSKIYIPLCFHNNCIHPFKDDCWCCLAAGTKKDWCWLEKDFPDAKELCMKTCTRKI.

The signal sequence occupies residues 1-21 (MKSHIAIICIIMLSFFSMHEY). Disulfide bonds link Cys-39/Cys-54, Cys-44/Cys-82, Cys-52/Cys-78, and Cys-55/Cys-65.

Belongs to the MEG family.

This chain is EMBRYO SURROUNDING FACTOR 1-like protein 2 (ESFL2), found in Arabidopsis thaliana (Mouse-ear cress).